Reading from the N-terminus, the 248-residue chain is Triosephosphate isomerase (248 aa).

9–11 (NWK) serves as a coordination point for substrate. The active-site Electrophile is His92. Glu164 (proton acceptor) is an active-site residue. Residues Gly170, Ser209, and 230 to 231 (GG) each bind substrate.

Belongs to the triosephosphate isomerase family. In terms of assembly, homodimer.

It is found in the cytoplasm. It carries out the reaction D-glyceraldehyde 3-phosphate = dihydroxyacetone phosphate. Its pathway is carbohydrate biosynthesis; gluconeogenesis. It participates in carbohydrate degradation; glycolysis; D-glyceraldehyde 3-phosphate from glycerone phosphate: step 1/1. Its function is as follows. Involved in the gluconeogenesis. Catalyzes stereospecifically the conversion of dihydroxyacetone phosphate (DHAP) to D-glyceraldehyde-3-phosphate (G3P). The chain is Triosephosphate isomerase from Thiobacillus denitrificans (strain ATCC 25259 / T1).